The chain runs to 205 residues: High frequency lysogenization protein HflD homolog (205 aa).

The protein belongs to the HflD family.

It localises to the cytoplasm. The protein resides in the cell inner membrane. This chain is High frequency lysogenization protein HflD homolog, found in Vibrio campbellii (strain ATCC BAA-1116).